Here is a 372-residue protein sequence, read N- to C-terminus: N-methyl-L-tryptophan oxidase (372 aa).

D4–H34 contacts FAD. C308 carries the post-translational modification S-8alpha-FAD cysteine.

This sequence belongs to the MSOX/MTOX family. MTOX subfamily. As to quaternary structure, monomer. FAD is required as a cofactor.

The catalysed reaction is N(alpha)-methyl-L-tryptophan + O2 + H2O = L-tryptophan + formaldehyde + H2O2. Catalyzes the oxidative demethylation of N-methyl-L-tryptophan. This chain is N-methyl-L-tryptophan oxidase, found in Shigella boydii serotype 18 (strain CDC 3083-94 / BS512).